A 65-amino-acid polypeptide reads, in one-letter code: Large ribosomal subunit protein bL32 (65 aa).

Residues 1–19 (MAIVPKRKTSKQRKHKRQS) are compositionally biased toward basic residues. Residues 1 to 21 (MAIVPKRKTSKQRKHKRQSHS) are disordered.

The protein belongs to the bacterial ribosomal protein bL32 family.

In Mesomycoplasma hyopneumoniae (strain 7448) (Mycoplasma hyopneumoniae), this protein is Large ribosomal subunit protein bL32.